Consider the following 1993-residue polypeptide: Otoferlin (1993 aa).

A C2 1 domain is found at 1 to 98 (MALIVHLKTV…VEENRVEVSD (98 aa)). The Cytoplasmic segment spans residues 1-1959 (MALIVHLKTV…IKYLICTRYK (1959 aa)). The segment at 127-212 (PWDDGDFLGD…KEEPQRQDEP (86 aa)) is disordered. Residues 129 to 145 (DDGDFLGDESLQEEEKD) are compositionally biased toward acidic residues. Basic and acidic residues-rich tracts occupy residues 163–186 (PGEK…EHKA) and 202–211 (HKEEPQRQDE). C2 domains lie at 251 to 372 (KRSK…HKWA) and 415 to 546 (IEGN…FLPT). Positions 654–708 (NYGNEVDGTSRPQRPRPRKEPGDEEEVDLIQNSSDDEGDEAGDLASVSSTPPMRP) are disordered. Acidic residues predominate over residues 675–695 (GDEEEVDLIQNSSDDEGDEAG). A coiled-coil region spans residues 807–836 (RERLKSCMRELESMGQQAKSLRAQVKRHTV). C2 domains follow at residues 959 to 1084 (LHSF…PPRF) and 1131 to 1257 (RGPI…ANWN). Residues Asp-991, Asp-997, Asp-1053, Asp-1055, and Asp-1061 each contribute to the Ca(2+) site. 2 disordered regions span residues 1294-1318 (AEDE…EEPD) and 1339-1398 (LRQH…EKKK). Positions 1348-1357 (DLEEKEEMDS) are enriched in acidic residues. Positions 1366–1379 (KNKEKSRAAKEEKK) are enriched in basic and acidic residues. C2 domains lie at 1460–1589 (LPED…ATCG) and 1710–1861 (DMPA…KQCT). Ca(2+) contacts are provided by Asp-1504, Asp-1510, Asp-1559, Asp-1561, Asp-1567, Asp-1832, Ser-1835, and Asp-1838. A helical transmembrane segment spans residues 1960-1980 (WLIIKIVLALLGLLMLALFLY). The Extracellular portion of the chain corresponds to 1981-1993 (SLPGYMVKKLLGA).

The protein belongs to the ferlin family. Interacts with SNAP25; the interaction is direct. Interacts with STX1; the interaction is direct. Interacts with RAB8B. Ca(2+) is required as a cofactor. Isoform 1 is expressed in the cochlea and brain. Expressed in cerebellum (Purkinje cells), hippocampus (granule cells of the dentate gyrus and in pyramidal cells of the CA1-CA3 region) and cortex (stellate and pyramidal cells). Expressed in hair cells of vestibular organs such as the saccule, utricle and crista ampullari. Expressed in the cochlear inner and outer cells (IHCs and OHCs) (at protein level). Expressed in brain: brainstem, cerebellum (granules cells and Purkinje cell layer), cortex (layers IV and V), inferior colliculus, superior colliculus and hippocampus (granule cells of the dentate gyrus and in pyramidal cells of the CA1-CA3 region).

The protein localises to the cytoplasmic vesicle. It localises to the secretory vesicle. Its subcellular location is the synaptic vesicle membrane. The protein resides in the basolateral cell membrane. It is found in the endoplasmic reticulum membrane. The protein localises to the golgi apparatus membrane. It localises to the presynaptic cell membrane. Its subcellular location is the cell membrane. Its function is as follows. Key calcium ion sensor involved in the Ca(2+)-triggered synaptic vesicle-plasma membrane fusion and in the control of neurotransmitter release at these output synapses. Interacts in a calcium-dependent manner to the presynaptic SNARE proteins at ribbon synapses of cochlear inner hair cells (IHCs) to trigger exocytosis of neurotransmitter. Also essential to synaptic exocytosis in immature outer hair cells (OHCs). May also play a role within the recycling of endosomes. The chain is Otoferlin (Otof) from Rattus norvegicus (Rat).